The primary structure comprises 592 residues: Glutamine-rich protein 2 (592 aa).

Residues 488–592 (QLQQAQHARP…TRGPRSTAAH (105 aa)) are disordered. Over residues 544-567 (LQSNVSHSSIPTDIASLQGSQQGL) the composition is skewed to polar residues.

Interacts with AKAP3, ODF2 and TSSK4. Interacts with AKAP4. Expressed in testis. Not detected in heart, brain, kidney, stomach, ovary, liver, lung and uterus.

The protein localises to the nucleus membrane. It is found in the nucleus. Its subcellular location is the cytoplasm. It localises to the cell projection. The protein resides in the cilium. The protein localises to the flagellum. Functionally, has an essential role in the formation of sperm flagella and flagellar structure maintainance. It acts as a suppressor of ubiquitination and degradation of proteins involved in flagellar development and motility. This Mus musculus (Mouse) protein is Glutamine-rich protein 2.